A 382-amino-acid chain; its full sequence is MSEVPSAFFSSPAAGGIVLIIASAAAIIVANSPLREGYEVFLKYNAAGLSVEHWINDALMAVFFMMVGLEIKRELLTGQLATWGQRALPGFAALGGMAVPAAIYVWFNAGSDETLAGWAIPAATDIAFALGVLALLGSRVPASLKIFLSALAILDDMGAVAIIALFYTSNISFLMLAGAAVTVALLFIMNRAGITRLFPYLLAGGVLWFFMLQSGVHATIAGILLALFIPLRVTDPDKQSPLARLEHGINPWVTFLILPLFGFANAGVALSGMTADDLMSPVPVGVALGLFVGKQAGIFGLSLLAVSLGLAKRPEKSTWLQVYGVSVLCGIGFTMSLFIGNLAFAESPLLVDEVKVGVLAGSVLAALAGMLILRFSPSHPSR.

A run of 11 helical transmembrane segments spans residues 8 to 28 (FFSSPAAGGIVLIIASAAAII), 49 to 69 (LSVEHWINDALMAVFFMMVGL), 87 to 107 (ALPGFAALGGMAVPAAIYVWF), 115 to 135 (LAGWAIPAATDIAFALGVLAL), 146 to 166 (IFLSALAILDDMGAVAIIALF), 169 to 189 (SNISFLMLAGAAVTVALLFIM), 209 to 229 (FFMLQSGVHATIAGILLALFI), 252 to 272 (WVTFLILPLFGFANAGVALSG), 286 to 306 (VALGLFVGKQAGIFGLSLLAV), 325 to 345 (VSVLCGIGFTMSLFIGNLAFA), and 353 to 373 (EVKVGVLAGSVLAALAGMLIL).

This sequence belongs to the NhaA Na(+)/H(+) (TC 2.A.33) antiporter family.

It localises to the cell inner membrane. It carries out the reaction Na(+)(in) + 2 H(+)(out) = Na(+)(out) + 2 H(+)(in). Functionally, na(+)/H(+) antiporter that extrudes sodium in exchange for external protons. This is Na(+)/H(+) antiporter NhaA 2 from Klebsiella pneumoniae subsp. pneumoniae (strain ATCC 700721 / MGH 78578).